The following is a 390-amino-acid chain: Peroxisomal sarcosine oxidase (390 aa).

Residue 9–39 (DAIVIGAGIQGCFTAYHLAKHRKRILLLEQF) participates in FAD binding. Lys-126 is modified (N6-acetyllysine). Position 319 is an S-8alpha-FAD cysteine (Cys-319). Residues 388–390 (AHL) carry the Microbody targeting signal motif.

It belongs to the MSOX/MTOX family. Requires FAD as cofactor. As to expression, expressed in the liver and kidney.

It localises to the peroxisome. The catalysed reaction is sarcosine + O2 + H2O = formaldehyde + glycine + H2O2. It carries out the reaction L-pipecolate + O2 = L-1-piperideine-6-carboxylate + H2O2 + H(+). Functionally, metabolizes sarcosine and L-pipecolic acid. In Homo sapiens (Human), this protein is Peroxisomal sarcosine oxidase (PIPOX).